The following is a 514-amino-acid chain: Peptide chain release factor 3 (514 aa).

The tr-type G domain occupies Lys-8–His-268. GTP-binding positions include Ser-17 to Thr-24, Asp-85 to His-89, and Asn-139 to Asp-142.

The protein belongs to the TRAFAC class translation factor GTPase superfamily. Classic translation factor GTPase family. PrfC subfamily.

Its subcellular location is the cytoplasm. Functionally, increases the formation of ribosomal termination complexes and stimulates activities of RF-1 and RF-2. It binds guanine nucleotides and has strong preference for UGA stop codons. It may interact directly with the ribosome. The stimulation of RF-1 and RF-2 is significantly reduced by GTP and GDP, but not by GMP. This Streptococcus pyogenes serotype M49 (strain NZ131) protein is Peptide chain release factor 3.